Here is a 344-residue protein sequence, read N- to C-terminus: MVCARHQPGGLCLLLLLLCQFMEDRSAQAGNCWLRQAKNGRCQVLYKTELSKEECCSTGRLSTSWTEEDVNDNTLFKWMIFNGGAPNCIPCKETCENVDCGPGKKCRMNKKNKPRCVCAPDCSNITWKGPVCGLDGKTYRNECALLKARCKEQPELEVQYQGKCKKTCRDVFCPGSSTCVVDQTNNAYCVTCNRICPEPSSSEQSLCGNDGVTYSSACHLRKATCLLGRSIGLAYEGKCIKAKSCEDIQCGGGKKCLWDFKVGRGRCSLCDELCPDSKSDEPVCASDNATYASECAMKEAACSSGVLLEVKHSGSCNSISEETEEEEEEEDQDYSFPISSTLEW.

Residues 1-29 (MVCARHQPGGLCLLLLLLCQFMEDRSAQA) form the signal peptide. The TB domain maps to 30–103 (GNCWLRQAKN…TCENVDCGPG (74 aa)). Intrachain disulfides connect Cys32-Cys55, Cys42-Cys88, Cys56-Cys91, Cys95-Cys106, Cys100-Cys116, Cys118-Cys150, Cys122-Cys143, Cys132-Cys164, Cys168-Cys179, Cys173-Cys189, Cys192-Cys225, Cys196-Cys218, Cys207-Cys239, Cys245-Cys256, Cys250-Cys267, Cys270-Cys302, Cys274-Cys295, and Cys284-Cys316. One can recognise a Follistatin-like 1 domain in the interval 94-117 (TCENVDCGPGKKCRMNKKNKPRCV). A Kazal-like 1 domain is found at 112 to 166 (NKPRCVCAPDCSNITWKGPVCGLDGKTYRNECALLKARCKEQPELEVQYQGKCKK). The N-linked (GlcNAc...) asparagine glycan is linked to Asn124. The region spanning 167–190 (TCRDVFCPGSSTCVVDQTNNAYCV) is the Follistatin-like 2 domain. The Kazal-like 2 domain maps to 186–241 (NAYCVTCNRICPEPSSSEQSLCGNDGVTYSSACHLRKATCLLGRSIGLAYEGKCIK). Residues 244–268 (SCEDIQCGGGKKCLWDFKVGRGRCS) form the Follistatin-like 3 domain. One can recognise a Kazal-like 3 domain in the interval 264 to 318 (RGRCSLCDELCPDSKSDEPVCASDNATYASECAMKEAACSSGVLLEVKHSGSCNS). Asn288 carries N-linked (GlcNAc...) asparagine glycosylation. The interval 315 to 344 (SCNSISEETEEEEEEEDQDYSFPISSTLEW) is disordered. Residues 321 to 333 (EETEEEEEEEDQD) show a composition bias toward acidic residues.

Interacts with GDF11. Interacts with activin A/INHBA. Interacts with myostatin/MSTN.

The protein resides in the secreted. Its subcellular location is the nucleus. It localises to the nucleolus. In terms of biological role, multifunctional regulatory protein whose primary function is to antagonize members of the transforming growth factor beta (TGF-beta) superfamily including activin, myostatin, GDF11 or bone morphogenetic proteins (BMPs). Mechanistically, binds to these ligands in the extracellular space, blocking their type II receptor-binding site to inhibit downstream signaling. Plays an essential role in muscle fiber formation and growth both by preventing the repressive effects of myostatin and through SMAD3/AKT/mTOR signaling independently of myostatin. Also promotes neural differentiation by antagonizing the action BMP4. Acts as a specific inhibitor of the biosynthesis and secretion of pituitary follicle stimulating hormone (FSH) by sequestering activin A/INHBA. On the other hand, translocates into the nucleus where it down-regulates rRNA synthesis and ribosome biogenesis to maintain cellular energy homeostasis by binding to rDNA. This Rattus norvegicus (Rat) protein is Follistatin.